Here is a 537-residue protein sequence, read N- to C-terminus: Small conductance calcium-activated potassium channel protein 1 (537 aa).

Over residues Met-1–Val-10 the composition is skewed to polar residues. Residues Met-1 to Leu-90 form a disordered region. The segment covering Gln-65–Asp-76 has biased composition (acidic residues). A helical membrane pass occupies residues Leu-108–Val-128. A helical membrane pass occupies residues Phe-137–Tyr-157. Residues Ile-176 to His-196 traverse the membrane as a helical segment. Residues Val-225 to His-245 form a helical membrane-spanning segment. The chain crosses the membrane as a helical span at residues Leu-274 to Ala-294. An intramembrane region (pore-forming) is located at residues Phe-314–Val-334. The tract at residues Val-343–Ala-363 is segment S6. Residues Asp-381–Ile-460 form a calmodulin-binding region.

The protein belongs to the potassium channel KCNN family. KCa2.1/KCNN1 subfamily. Homodimer. Heteromultimer with KCNN2 and KCNN3. The complex is composed of 4 channel subunits each of which binds to a calmodulin subunit which regulates the channel activity through calcium-binding. Interacts with calmodulin. As to expression, highest expression in brain and liver with lower levels in heart, testis, kidney and colon. In colon, detected in smooth muscle cells. Expressed in atrial and ventricular myocytes with higher levels in atrial myocytes.

Its subcellular location is the membrane. It localises to the cytoplasm. The protein resides in the myofibril. It is found in the sarcomere. The protein localises to the z line. It catalyses the reaction K(+)(in) = K(+)(out). With respect to regulation, inhibited by bee venom neurotoxin apamin. Inhibited by d-tubocurarine and tetraethylammonium (TEA). Small conductance calcium-activated potassium channel that mediates the voltage-independent transmembrane transfer of potassium across the cell membrane through a constitutive interaction with calmodulin which binds the intracellular calcium allowing its opening. The current is characterized by a voltage-independent activation, an intracellular calcium concentration increase-dependent activation and a single-channel conductance of about 3 picosiemens. Also presents an inwardly rectifying current, thus reducing its already small outward conductance of potassium ions, which is particularly the case when the membrane potential displays positive values, above + 20 mV. Activation is followed by membrane hyperpolarization. Thought to regulate neuronal excitability by contributing to the slow component of synaptic afterhyperpolarization. The protein is Small conductance calcium-activated potassium channel protein 1 of Mus musculus (Mouse).